The chain runs to 526 residues: Peptide chain release factor 3 (526 aa).

In terms of domain architecture, tr-type G spans serine 11–leucine 277. GTP-binding positions include serine 20–threonine 27, aspartate 88–histidine 92, and asparagine 142–aspartate 145.

It belongs to the TRAFAC class translation factor GTPase superfamily. Classic translation factor GTPase family. PrfC subfamily.

Its subcellular location is the cytoplasm. Increases the formation of ribosomal termination complexes and stimulates activities of RF-1 and RF-2. It binds guanine nucleotides and has strong preference for UGA stop codons. It may interact directly with the ribosome. The stimulation of RF-1 and RF-2 is significantly reduced by GTP and GDP, but not by GMP. This chain is Peptide chain release factor 3, found in Buchnera aphidicola subsp. Acyrthosiphon pisum (strain 5A).